Consider the following 594-residue polypeptide: MATLSMQVSILSKEVKNVNNIGMRASKPMVARRVSTTRLRPICSASLQVEEETRRSGNYQASIWNNDYVQSFNTNQYKDEKHLKKKEELIAQVKILLNTKMEAVKQLELIEDLRNLGLTYYFQDEVKKILTSIYNDHKCFKNEQVGDLYFTSLGFRLLRLHGFDVSEEVFDFFKNEDGSDFKASLGENIKDVLQLYEASFLIREGEVILEQARVFSTKHLEKKVDEGINDEKLLAWIRHSLALPLHWRIQRLEARWFLDAYRARKDMIPLIFELGKIDFHIIQETQLEELQEVSKWWTNSNLAEKLPFVRDRIVECYFWALGLFEPHEYGYQRKMAAIIITFVTIIDDVYDVYGTLDELQLFTDAIRKWDFQSISTLPYYMQVCYLALYTYASELAYDILKDQGFNSIAYLQRSWLSLVEGFFQEAKWYYAGYTPTLAEYLENAKVSISSPTIISQVYFTLPNSTERTVVENVFGYHNILYLSGMILRLADDLGTTQFELKRGDVQKAIQCYMKDNNATEKEGAEHVKYLLREAWKEMNTAMADPECPLSEDLVDAAANLGRASQFIYLEGDGHGVQHSEIHNQMGGLIFEPYV.

A chloroplast-targeting transit peptide spans M1–S44. Residues D347 and D351 each coordinate Mn(2+). Positions D347 to D351 match the DDXXD motif motif. 2 homodimerization regions span residues Y353–L359 and E425–P462. Residues D491 and E499 each coordinate Mn(2+).

The protein belongs to the terpene synthase family. As to quaternary structure, homodimer. It depends on Mn(2+) as a cofactor. The cofactor is Mg(2+). Expressed in peltate glandular trichomes.

It localises to the plastid. It is found in the chloroplast. The enzyme catalyses (2E)-geranyl diphosphate = gamma-terpinene + diphosphate. It catalyses the reaction (2E)-geranyl diphosphate = alpha-terpinene + diphosphate. It functions in the pathway secondary metabolite biosynthesis; terpenoid biosynthesis. Involved in the biosynthesis of phenolic monoterpenes natural products thymol and carvacrol which have a broad range of biological activities acting as antimicrobial compounds, insecticides, antioxidants and pharmaceutical agents. Monoterpene synthase which catalyzes the conversion of geranyl diphosphate (GPP) to gamma-terpinene and the minor products alpha-thujene, alpha-terpinene, myrcene, sabinene, (+)-R-limonene, alpha-pinene and alpha-phellandrene. This is Gamma-terpinene synthase, chloroplastic from Origanum vulgare (Wild marjoram).